Consider the following 1362-residue polypeptide: DNA-directed RNA polymerase subunit beta (1362 aa).

This sequence belongs to the RNA polymerase beta chain family. The RNAP catalytic core consists of 2 alpha, 1 beta, 1 beta' and 1 omega subunit. When a sigma factor is associated with the core the holoenzyme is formed, which can initiate transcription.

The catalysed reaction is RNA(n) + a ribonucleoside 5'-triphosphate = RNA(n+1) + diphosphate. Its function is as follows. DNA-dependent RNA polymerase catalyzes the transcription of DNA into RNA using the four ribonucleoside triphosphates as substrates. The chain is DNA-directed RNA polymerase subunit beta from Parvibaculum lavamentivorans (strain DS-1 / DSM 13023 / NCIMB 13966).